Here is a 142-residue protein sequence, read N- to C-terminus: Group IIE secretory phospholipase A2 (142 aa).

Residues 1–19 (MKSPHVLVFLCLLVALVTG) form the signal peptide. Positions 41, 43, 45, 47, and 49 each coordinate Ca(2+). Disulfide bonds link Cys-44–Cys-135, Cys-46–Cys-62, Cys-61–Cys-115, Cys-67–Cys-142, Cys-68–Cys-108, Cys-77–Cys-101, and Cys-95–Cys-106. His-65 is a catalytic residue. Asp-66 is a binding site for Ca(2+). Asp-109 is an active-site residue. Ca(2+) is bound by residues Tyr-130 and Asn-132.

The protein belongs to the phospholipase A2 family. The cofactor is Ca(2+). In terms of tissue distribution, restricted to the brain, heart, lung, and placenta.

The protein resides in the secreted. The protein localises to the cytoplasm. It carries out the reaction a 1,2-diacyl-sn-glycero-3-phosphoethanolamine + H2O = a 1-acyl-sn-glycero-3-phosphoethanolamine + a fatty acid + H(+). The catalysed reaction is 1-hexadecanoyl-2-(9Z-octadecenoyl)-sn-glycero-3-phosphoethanolamine + H2O = 1-hexadecanoyl-sn-glycero-3-phosphoethanolamine + (9Z)-octadecenoate + H(+). It catalyses the reaction 1-hexadecanoyl-2-(9Z,12Z-octadecadienoyl)-sn-glycero-3-phosphoethanolamine + H2O = 1-hexadecanoyl-sn-glycero-3-phosphoethanolamine + (9Z,12Z)-octadecadienoate + H(+). The enzyme catalyses 1-hexadecanoyl-2-(5Z,8Z,11Z,14Z-eicosatetraenoyl)-sn-glycero-3-phosphoethanolamine + H2O = 1-hexadecanoyl-sn-glycero-3-phosphoethanolamine + (5Z,8Z,11Z,14Z)-eicosatetraenoate + H(+). It carries out the reaction 1,2-dihexadecanoyl-sn-glycero-3-phospho-(1'-sn-glycerol) + H2O = 1-hexadecanoyl-sn-glycero-3-phospho-(1'-sn-glycerol) + hexadecanoate + H(+). The catalysed reaction is 1-hexadecanoyl-2-(9Z-octadecenoyl)-sn-glycero-3-phosphoglycerol + H2O = 1-hexadecanoyl-sn-glycero-3-phosphoglycerol + (9Z)-octadecenoate + H(+). It catalyses the reaction a 1,2-diacyl-sn-glycero-3-phosphocholine + H2O = a 1-acyl-sn-glycero-3-phosphocholine + a fatty acid + H(+). The enzyme catalyses 1,2-dihexadecanoyl-sn-glycero-3-phosphocholine + H2O = 1-hexadecanoyl-sn-glycero-3-phosphocholine + hexadecanoate + H(+). It carries out the reaction 1-hexadecanoyl-2-(9Z-octadecenoyl)-sn-glycero-3-phosphocholine + H2O = 1-hexadecanoyl-sn-glycero-3-phosphocholine + (9Z)-octadecenoate + H(+). The catalysed reaction is 1-hexadecanoyl-2-(9Z,12Z-octadecadienoyl)-sn-glycero-3-phosphocholine + H2O = (9Z,12Z)-octadecadienoate + 1-hexadecanoyl-sn-glycero-3-phosphocholine + H(+). It catalyses the reaction 1-hexadecanoyl-2-(4Z,7Z,10Z,13Z,16Z,19Z-docosahexaenoyl)-sn-glycero-3-phosphocholine + H2O = (4Z,7Z,10Z,13Z,16Z,19Z)-docosahexaenoate + 1-hexadecanoyl-sn-glycero-3-phosphocholine + H(+). In terms of biological role, secretory calcium-dependent phospholipase A2 that primarily targets extracellular phospholipids. Hydrolyzes the ester bond of the fatty acyl group attached at sn-2 position of phospholipids (phospholipase A2 activity), releasing various unsaturated fatty acids including oleoate, linoleoate, arachidonate, docosahexaenoate and lysophosphatidylethanolamines in preference to lysophosphatidylcholines. In response to high-fat diet, hydrolyzes minor lipoprotein phospholipids including phosphatidylserines, phosphatidylinositols and phosphatidylglycerols, altering lipoprotein composition and fat storage in adipose tissue and liver. May act in an autocrine and paracrine manner. Contributes to lipid remodeling of cellular membranes and generation of lipid mediators involved in pathogen clearance. Cleaves sn-2 fatty acyl chains of phosphatidylglycerols and phosphatidylethanolamines, which are major components of membrane phospholipids in bacteria. Acts as a hair follicle phospholipase A2. Selectively releases lysophosphatidylethanolamines (LPE) and various unsaturated fatty acids in skin to regulate hair follicle homeostasis. May regulate the inflammatory response by releasing arachidonate, a precursor of prostaglandins and leukotrienes. Upon allergen exposure, may participate in allergic inflammatory response by enhancing leukotriene C4 synthesis and degranulation in mast cells. In Homo sapiens (Human), this protein is Group IIE secretory phospholipase A2 (PLA2G2E).